The chain runs to 175 residues: Shikimate kinase (175 aa).

ATP is bound at residue 11–16 (GAGKTT). Thr-15 lines the Mg(2+) pocket. Asp-33, Arg-57, and Gly-79 together coordinate substrate. Arg-118 provides a ligand contact to ATP. Substrate is bound at residue Arg-140.

Belongs to the shikimate kinase family. Monomer. Mg(2+) is required as a cofactor.

The protein localises to the cytoplasm. It catalyses the reaction shikimate + ATP = 3-phosphoshikimate + ADP + H(+). It functions in the pathway metabolic intermediate biosynthesis; chorismate biosynthesis; chorismate from D-erythrose 4-phosphate and phosphoenolpyruvate: step 5/7. Its function is as follows. Catalyzes the specific phosphorylation of the 3-hydroxyl group of shikimic acid using ATP as a cosubstrate. In Bacteroides thetaiotaomicron (strain ATCC 29148 / DSM 2079 / JCM 5827 / CCUG 10774 / NCTC 10582 / VPI-5482 / E50), this protein is Shikimate kinase.